Here is a 754-residue protein sequence, read N- to C-terminus: NAD(P)H-quinone oxidoreductase subunit 5, chloroplastic (754 aa).

16 consecutive transmembrane segments (helical) span residues 8 to 28, 40 to 60, 89 to 109, 125 to 145, 147 to 167, 185 to 205, 219 to 239, 258 to 278, 280 to 300, 327 to 347, 354 to 374, 396 to 416, 425 to 445, 552 to 572, 608 to 628, and 733 to 753; these read FWII…GLLL, WVFP…YLAI, VDPL…LVLI, FAYM…SNLI, IYFF…FWFT, GDFG…SLEF, NEVN…GAIA, TPIS…FLGA, LLPL…LGII, LGYM…FHLI, ALLF…VGYS, TSFL…CFWS, WLYS…TAFY, FSML…IPFF, FITN…IASF, and LVYI…VLFF.

Belongs to the complex I subunit 5 family. As to quaternary structure, NDH is composed of at least 16 different subunits, 5 of which are encoded in the nucleus.

The protein resides in the plastid. It is found in the chloroplast thylakoid membrane. The catalysed reaction is a plastoquinone + NADH + (n+1) H(+)(in) = a plastoquinol + NAD(+) + n H(+)(out). It carries out the reaction a plastoquinone + NADPH + (n+1) H(+)(in) = a plastoquinol + NADP(+) + n H(+)(out). Its function is as follows. NDH shuttles electrons from NAD(P)H:plastoquinone, via FMN and iron-sulfur (Fe-S) centers, to quinones in the photosynthetic chain and possibly in a chloroplast respiratory chain. The immediate electron acceptor for the enzyme in this species is believed to be plastoquinone. Couples the redox reaction to proton translocation, and thus conserves the redox energy in a proton gradient. The sequence is that of NAD(P)H-quinone oxidoreductase subunit 5, chloroplastic (ndhF) from Morus indica (Mulberry).